A 223-amino-acid chain; its full sequence is Urease accessory protein UreF (223 aa).

Belongs to the UreF family. In terms of assembly, ureD, UreF and UreG form a complex that acts as a GTP-hydrolysis-dependent molecular chaperone, activating the urease apoprotein by helping to assemble the nickel containing metallocenter of UreC. The UreE protein probably delivers the nickel.

The protein localises to the cytoplasm. Its function is as follows. Required for maturation of urease via the functional incorporation of the urease nickel metallocenter. The sequence is that of Urease accessory protein UreF from Mesorhizobium japonicum (strain LMG 29417 / CECT 9101 / MAFF 303099) (Mesorhizobium loti (strain MAFF 303099)).